Here is a 390-residue protein sequence, read N- to C-terminus: MKATGIVVEYNPFHNGHKLHLNKARELTQADVVIAVMSGSFVQRGEPAILPKWERTRMALAAGVDMVVELPVSFATQHATIFAEEAVRILDAIHVDTLFFGSEHGVAEDFTLAAKKVVDNEARFDEAIQLALVDKKTSYARAYTEAFKKLFGQNLLDITKPNNILGFHYALAAQKQNPSISLQTIPREHAGYHDEEANHDQIASATAIRKLILAGKLEESSHYLPASSIAILRNYEGPFLSWTDYWSFLQYRLIQAGSEELEGIRGVSEGIQNRMQQAATKAQNFSDFIELTKTKRYSNARLQRTALQILLNARSQTSSPYIRILGMNKTGQQYLSLHKKNISLPIITTVSKAPAGLLEEELRATNIYTLAKGLENYQAGDFHIPPILTL.

Residues 7 to 20 (VVEY…HKLH), glycine 101, asparagine 162, and arginine 187 each bind ATP.

This sequence belongs to the TmcAL family.

The protein resides in the cytoplasm. It catalyses the reaction cytidine(34) in elongator tRNA(Met) + acetate + ATP = N(4)-acetylcytidine(34) in elongator tRNA(Met) + AMP + diphosphate. Its function is as follows. Catalyzes the formation of N(4)-acetylcytidine (ac(4)C) at the wobble position of elongator tRNA(Met), using acetate and ATP as substrates. First activates an acetate ion to form acetyladenylate (Ac-AMP) and then transfers the acetyl group to tRNA to form ac(4)C34. The protein is tRNA(Met) cytidine acetate ligase of Listeria monocytogenes serotype 4b (strain F2365).